Reading from the N-terminus, the 320-residue chain is Transmembrane protein 41 homolog (320 aa).

Positions 20 to 72 (GRAKALQEHSPDQVATPLLPQVPPQEQQDLNPQQQQQQQQQQQATPQKQAMSA) are disordered. Low complexity predominate over residues 43–68 (PQEQQDLNPQQQQQQQQQQQATPQKQ). The next 6 helical transmembrane spans lie at 83 to 103 (VIVA…YAIF), 141 to 161 (VMFG…PGSL), 173 to 195 (FPIA…YTLS), 225 to 242 (LFNY…PNWF), 245 to 265 (LASP…FCGV), and 289 to 309 (FSWT…LPGL).

Belongs to the TMEM41 family. In terms of tissue distribution, in embryos, strongly expressed in the nervous system.

Its subcellular location is the membrane. Required in cholinergic neurons, but not in motor neurons, for normal neurotransmitter release by motor neurons. Involved in muscle growth. This is Transmembrane protein 41 homolog (stas) from Drosophila melanogaster (Fruit fly).